Consider the following 177-residue polypeptide: MTGAPSARRSELSTQNRLTHIDETGAARMVDVSQKDVTTRLARASGRVLVSPRVIELLRGEGVPKGDALATARIAGIMGAKRTPDLIPLCHPLAVSGVEVELGVADDAVEITATVKTTDRTGVEMEALTAVSVAALTVIDMVKAVDKSAVITDVRVEAKSGGKSGDYRRTAPEGPDA.

Substrate contacts are provided by residues 89–91 (LCH) and 125–126 (ME). D140 is an active-site residue.

The protein belongs to the MoaC family. Homohexamer; trimer of dimers.

The catalysed reaction is (8S)-3',8-cyclo-7,8-dihydroguanosine 5'-triphosphate = cyclic pyranopterin phosphate + diphosphate. It functions in the pathway cofactor biosynthesis; molybdopterin biosynthesis. Its function is as follows. Catalyzes the conversion of (8S)-3',8-cyclo-7,8-dihydroguanosine 5'-triphosphate to cyclic pyranopterin monophosphate (cPMP). The sequence is that of Cyclic pyranopterin monophosphate synthase from Streptomyces griseus subsp. griseus (strain JCM 4626 / CBS 651.72 / NBRC 13350 / KCC S-0626 / ISP 5235).